The chain runs to 171 residues: Cadmium-induced protein AS8 (171 aa).

The chain is Cadmium-induced protein AS8 from Arabidopsis thaliana (Mouse-ear cress).